Consider the following 494-residue polypeptide: MGNFIQGCKDYFSQQKNTNIRLTLPVVCFVWQIAMIILFGVFIRYDEESDTHWVETKAHDNITSDIENDFYFRYPSFQDVHVMIFVGFGFLMTFLKRYSFGAVGFNFLIASFGLQWALLMQGWFHSLDPQTGKIFIGVESLINADFCVAGCLIAYGAVLGKVSPVQLLVMTLFGVTLFAVEEYIILNLLHARDAGGSMVIHTFGGYYGLTISWVLYRPNLHQSKRMQGSVYHSDIFAMIGTLFLWMFWPSFNSAITDHGDGQHRAVINTYLCLASTVLTTVAISSFSQKTGKLDMVHIQNSTLAGGVALGTAAEFMISPYGALIVGFLCGIISTMGYIFISPFLEKTLKIQDTCGIHNLHAMPGVIGGIVGAITAAAASESVYGKHALINTFDFTGDFKDRTVLTQGGYQAAGMCVSIVFGVAGGAIVGSILKLPIWGDPADENCFDDEVYWELPDEEEEHQESIPPILEYNNHMIHKRQDLSESNFSVEHCES.

Over 1-22 (MGNFIQGCKDYFSQQKNTNIRL) the chain is Cytoplasmic. A helical transmembrane segment spans residues 23-43 (TLPVVCFVWQIAMIILFGVFI). Over 44–74 (RYDEESDTHWVETKAHDNITSDIENDFYFRY) the chain is Extracellular. An N-linked (GlcNAc...) asparagine glycan is attached at Asn-61. The helical transmembrane segment at 75–95 (PSFQDVHVMIFVGFGFLMTFL) threads the bilayer. Over 96-99 (KRYS) the chain is Cytoplasmic. Residues 100 to 120 (FGAVGFNFLIASFGLQWALLM) traverse the membrane as a helical segment. Topologically, residues 121-133 (QGWFHSLDPQTGK) are extracellular. A helical transmembrane segment spans residues 134 to 154 (IFIGVESLINADFCVAGCLIA). Residues 155–166 (YGAVLGKVSPVQ) are Cytoplasmic-facing. Residues 167 to 187 (LLVMTLFGVTLFAVEEYIILN) form a helical membrane-spanning segment. Residues 188 to 194 (LLHARDA) lie on the Extracellular side of the membrane. Residues 195-215 (GGSMVIHTFGGYYGLTISWVL) form a helical membrane-spanning segment. The Cytoplasmic portion of the chain corresponds to 216 to 234 (YRPNLHQSKRMQGSVYHSD). A helical transmembrane segment spans residues 235-255 (IFAMIGTLFLWMFWPSFNSAI). At 256–265 (TDHGDGQHRA) the chain is on the extracellular side. A helical transmembrane segment spans residues 266–286 (VINTYLCLASTVLTTVAISSF). The Cytoplasmic segment spans residues 287 to 297 (SQKTGKLDMVH). A helical membrane pass occupies residues 298–318 (IQNSTLAGGVALGTAAEFMIS). Position 319 (Pro-319) is a topological domain, extracellular. Residues 320 to 340 (YGALIVGFLCGIISTMGYIFI) form a helical membrane-spanning segment. Residues 341 to 358 (SPFLEKTLKIQDTCGIHN) are Cytoplasmic-facing. The helical transmembrane segment at 359 to 379 (LHAMPGVIGGIVGAITAAAAS) threads the bilayer. The Extracellular segment spans residues 380–411 (ESVYGKHALINTFDFTGDFKDRTVLTQGGYQA). A helical transmembrane segment spans residues 412–432 (AGMCVSIVFGVAGGAIVGSIL). Residues 433 to 494 (KLPIWGDPAD…SNFSVEHCES (62 aa)) lie on the Cytoplasmic side of the membrane.

It belongs to the ammonium transporter (TC 2.A.49) family. Rh subfamily. Homotrimer.

It localises to the apical cell membrane. Functionally, functions as an ammonia transporter. May play a role in the elimination of ammonia in the gill. This Oncorhynchus mykiss (Rainbow trout) protein is Ammonium transporter Rh type C (rhcg).